The following is a 132-amino-acid chain: Small ribosomal subunit protein uS8 (132 aa).

It belongs to the universal ribosomal protein uS8 family. In terms of assembly, part of the 30S ribosomal subunit. Contacts proteins S5 and S12.

Its function is as follows. One of the primary rRNA binding proteins, it binds directly to 16S rRNA central domain where it helps coordinate assembly of the platform of the 30S subunit. This Mycobacterium leprae (strain Br4923) protein is Small ribosomal subunit protein uS8.